A 196-amino-acid chain; its full sequence is uncharacterized protein (196 aa).

Residues 22–42 traverse the membrane as a helical segment; it reads MIIIPMALLVFILIIGSFFAI.

It is found in the cell membrane. This is an uncharacterized protein from Lactobacillus acidophilus (strain ATCC 700396 / NCK56 / N2 / NCFM).